The chain runs to 235 residues: Orotidine 5'-phosphate decarboxylase (235 aa).

Substrate contacts are provided by residues Asp-12, Lys-34, 61–70 (DMKLLDIDNT), Thr-116, Arg-177, Gln-186, Gly-206, and Arg-207. The active-site Proton donor is Lys-63.

The protein belongs to the OMP decarboxylase family. Type 1 subfamily. Homodimer.

It catalyses the reaction orotidine 5'-phosphate + H(+) = UMP + CO2. The protein operates within pyrimidine metabolism; UMP biosynthesis via de novo pathway; UMP from orotate: step 2/2. Its function is as follows. Catalyzes the decarboxylation of orotidine 5'-monophosphate (OMP) to uridine 5'-monophosphate (UMP). The polypeptide is Orotidine 5'-phosphate decarboxylase (Rhizobium etli (strain ATCC 51251 / DSM 11541 / JCM 21823 / NBRC 15573 / CFN 42)).